The sequence spans 191 residues: Abscisic acid receptor PYR1 (191 aa).

An START-like region spans residues 23–176 (YQLDPGSCSS…NLQKLATVAE (154 aa)). Residue Lys-59 participates in abscisate binding. At Thr-78 the chain carries Phosphothreonine; by CARK1. Residues 85 to 89 (SGLPA) carry the Gate loop motif. Abscisate is bound by residues 89 to 94 (ANTSTE), 116 to 122 (RLTNYKS), and Glu-141. Positions 115–117 (HRL) match the Latch loop motif.

It belongs to the PYR/PYL/RCAR abscisic acid intracellular receptor family. Homodimer. Binds ABA on one subunit only. Interacts with HAB1, AHG3, ABI1 and ABI2 when complexed to ABA, and possibly with other PP2Cs. Binds to CARs protein in an ABA-independent manner, both at the plasma membrane and in the nucleus. Interacts directly with CAR1 and CAR4. Interacts with CARK1 in the cytosol. Interacts with AIP1 in an abscisic acid-dependent manner. Interacts with FREE1 (via N-terminus). Interacts with the E3 ubiquitin-protein ligase RSL1 at the plasma membrane. Ubiquitynated and degraded by the proteasome upon binding to the E3 ubiquitin-protein ligase RSL1 at the plasma membrane. In terms of processing, phosphorylated by CARK1 especially in response to abscisic acid (ABA); this phosphorylation promotes its stability and inhibitory ability to ABI1.

The protein resides in the cytoplasm. The protein localises to the cytosol. It localises to the nucleus. Its subcellular location is the cell membrane. It is found in the vacuole. Receptor for abscisic acid (ABA) required for ABA-mediated responses such as stomatal closure and germination inhibition. Inhibits the activity of group-A protein phosphatases type 2C (PP2Cs) when activated by ABA. Can be activated by both (-)-ABA and (+)-ABA. Promotes drought tolerance. In Arabidopsis thaliana (Mouse-ear cress), this protein is Abscisic acid receptor PYR1.